The following is a 515-amino-acid chain: ADP,ATP carrier protein 1 (515 aa).

Helical transmembrane passes span 24–44, 62–82, 93–113, 124–144, 149–169, 184–204, 226–246, 286–306, 329–349, 358–378, 383–403, and 465–485; these read LKKVLPMFLMFFCITFNYTVL, AIPFIKFWLVVPCAIIFMLIY, ALFYAVGTPFLIFFALFPTVI, EFADRLQAILPPGLLGLVAIL, FAAFYVLAELWGSVMLSLMFW, FYALFGIGANISLLASGRAIV, LLMAMTIVSGLVLMASYWWIN, YILLLALLVIAYGICINLIEV, FSFWTGVVSVLIMLFVGGNVI, ALVTPVMVLLTGIVFFALVIF, SGLVAMFGTTPLMLAVVVGAI, and IGAMTPYLAVILLFIIAIWLV.

Belongs to the ADP/ATP translocase tlc family.

It localises to the cell membrane. This is ADP,ATP carrier protein 1 (tlcA) from Chlamydia pneumoniae (Chlamydophila pneumoniae).